A 611-amino-acid chain; its full sequence is MSIHIVALGNEGDTFHQDNRPSGLIRTYLGRSPLVSGDESSLLLNAASTVARPVFTEYQASAFGNVKLVVHDCPVWDIFDSDWYTSRNLIGGADIIVIKYNVNDKFSFHEVKDNYIPVIKRALNSVPVIIAAVGTRQNEELPCTCPLCTSDRGSCVSTTEGIQLAKELGATYLELHSLDDFYIGKYFGGVLEYFMIQALNQKTSEKMKKRKMSNSFHGIRPPQLEQPEKMPVLKAEASHYNSDLNNLLFCCQCVDVVFYNPNLKKVVEAHKIVLCAVSHVFMLLFNVKSPTDIQDSSIIRTTQDLFAINRDTAFPGASHESSGNPPLRVIVKDALFCSCLSDILRFIYSGAFQWEELEEDIRKKLKDSGDVSNVIEKVKCILKTPGKINCLRNCKTYQARKPLWFYNTSLKFFLNKPMLADVVFEIQGTTVPAHRAILVARCEVMAAMFNGNYMEAKSVLIPVYGVSKETFLSFLEYLYTDSCCPAGIFQAMCLLICAEMYQVSRLQHICELFIITQLQSMPSRELASMNLDIVDLLKKAKFHHSDCLSTWLLHFIATNYLIFSQKPEFQDLSVEERSFVEKHRWPSNMYLKQLAEYRKYIHSRKCRCLVM.

A rho-like region spans residues 1 to 175; the sequence is MSIHIVALGN…KELGATYLEL (175 aa). 2 consecutive BTB domains span residues 254–356 and 420–487; these read VDVV…QWEE and ADVV…CPAG. Positions 420 to 611 are interaction with Rab9; the sequence is ADVVFEIQGT…HSRKCRCLVM (192 aa).

In terms of assembly, interacts with RAB9A and RAB9B (at lower level compared to RAB9A-binding). Interacts with M6PRBP1/TIP47. Ubiquitous. Highly expressed in neural and cardiac tissues, pancreas, placenta and testis.

It is found in the golgi apparatus. In terms of biological role, rab9-regulated ATPase required for endosome to Golgi transport. Involved in transport vesicle docking at the Golgi complex, possibly by participating in release M6PRBP1/TIP47 from vesicles to permit their efficient docking and fusion at the Golgi. Specifically binds Rab9, but not other Rab proteins. Has low intrinsic ATPase activity due to autoinhibition, which is relieved by Rab9. The protein is Rho-related BTB domain-containing protein 3 (RHOBTB3) of Homo sapiens (Human).